The sequence spans 147 residues: 2-amino-4-hydroxy-6-hydroxymethyldihydropteridine pyrophosphokinase (147 aa).

This sequence belongs to the HPPK family.

The enzyme catalyses 6-hydroxymethyl-7,8-dihydropterin + ATP = (7,8-dihydropterin-6-yl)methyl diphosphate + AMP + H(+). It participates in cofactor biosynthesis; tetrahydrofolate biosynthesis; 2-amino-4-hydroxy-6-hydroxymethyl-7,8-dihydropteridine diphosphate from 7,8-dihydroneopterin triphosphate: step 4/4. Its function is as follows. Catalyzes the transfer of pyrophosphate from adenosine triphosphate (ATP) to 6-hydroxymethyl-7,8-dihydropterin, an enzymatic step in folate biosynthesis pathway. The protein is 2-amino-4-hydroxy-6-hydroxymethyldihydropteridine pyrophosphokinase (folK) of Porphyromonas gingivalis (strain ATCC 33277 / DSM 20709 / CIP 103683 / JCM 12257 / NCTC 11834 / 2561).